A 58-amino-acid polypeptide reads, in one-letter code: Weak neurotoxin D2B (58 aa).

Cystine bridges form between cysteine 3–cysteine 24, cysteine 17–cysteine 41, and cysteine 43–cysteine 54.

Expressed by the venom gland.

Its subcellular location is the secreted. Binds to muscle nicotinic acetylcholine receptor (nAChR) and inhibit acetylcholine from binding to the receptor, thereby impairing neuromuscular transmission. The chain is Weak neurotoxin D2B from Micrurus pyrrhocryptus (Coral snake).